The following is a 450-amino-acid chain: Phosphoglucosamine mutase (450 aa).

Ser103 acts as the Phosphoserine intermediate in catalysis. Residues Ser103, Asp243, Asp245, and Asp247 each coordinate Mg(2+). The residue at position 103 (Ser103) is a Phosphoserine.

Belongs to the phosphohexose mutase family. It depends on Mg(2+) as a cofactor. In terms of processing, activated by phosphorylation.

The enzyme catalyses alpha-D-glucosamine 1-phosphate = D-glucosamine 6-phosphate. Functionally, catalyzes the conversion of glucosamine-6-phosphate to glucosamine-1-phosphate. The polypeptide is Phosphoglucosamine mutase (Lactobacillus delbrueckii subsp. bulgaricus (strain ATCC BAA-365 / Lb-18)).